A 488-amino-acid chain; its full sequence is Probable malate:quinone oxidoreductase (488 aa).

Belongs to the MQO family. FAD serves as cofactor.

The catalysed reaction is (S)-malate + a quinone = a quinol + oxaloacetate. Its pathway is carbohydrate metabolism; tricarboxylic acid cycle; oxaloacetate from (S)-malate (quinone route): step 1/1. The chain is Probable malate:quinone oxidoreductase from Neisseria meningitidis serogroup A / serotype 4A (strain DSM 15465 / Z2491).